The following is a 531-amino-acid chain: Arginine--tRNA ligase (531 aa).

Positions 113 to 123 (ANPTGPLHIGH) match the 'HIGH' region motif.

Belongs to the class-I aminoacyl-tRNA synthetase family. As to quaternary structure, monomer.

The protein localises to the cytoplasm. The enzyme catalyses tRNA(Arg) + L-arginine + ATP = L-arginyl-tRNA(Arg) + AMP + diphosphate. The chain is Arginine--tRNA ligase from Campylobacter fetus subsp. fetus (strain 82-40).